The sequence spans 357 residues: MSMFWGLNMKPERKYSQTIIKSFHISGVALDKGQEAKLYLAAEKQEYIVATVTKAIPQVALDLNFSKGDRIMFYTAGDASVSLLGYLHDIDSEDDEDDDQMTIENLLNSKAIKNSKKSEDDEDENESGEEDEEDTDDDSQIIEEYESFLENGEEEDDDDVDEDNEESGEEDEQDSDDSEAEEEQPKAKVAKLSPGASAKKSGKEQNGVAKKEEAKQQQKKKEKPEAKKEQPKAKEPAKQQPASKDPRTITGGVKIVDQVVGKGEEAKQGKRVSVYYIGRLQSNNKTFDSLLKGKPFKFALGGGEVIKGWDVGVAGMKVGGKRVITCPPHMAYGARGAPPKIGPNSTLVFEVELKAVH.

Serine 92 carries the phosphoserine modification. The tract at residues 113–251 (KNSKKSEDDE…ASKDPRTITG (139 aa)) is disordered. Over residues 120–182 (DDEDENESGE…QDSDDSEAEE (63 aa)) the composition is skewed to acidic residues. Serine 193 and serine 197 each carry phosphoserine. Over residues 222-237 (EKPEAKKEQPKAKEPA) the composition is skewed to basic and acidic residues. One can recognise a PPIase FKBP-type domain in the interval 269–357 (GKRVSVYYIG…VFEVELKAVH (89 aa)).

This sequence belongs to the FKBP-type PPIase family. Ubiquitously expressed, highest levels in ovary.

It localises to the nucleus. It carries out the reaction [protein]-peptidylproline (omega=180) = [protein]-peptidylproline (omega=0). Functionally, PPIases accelerate the folding of proteins. May function in a signal transduction cascade during early development. This is 39 kDa FK506-binding nuclear protein from Drosophila melanogaster (Fruit fly).